The primary structure comprises 185 residues: Urease accessory protein UreE (185 aa).

The disordered stretch occupies residues 153–185; the sequence is LRANSAQGHGHSHSHSHDHHGYHHHGDGHWHKH. The span at 162-175 shows a compositional bias: basic residues; that stretch reads GHSHSHSHDHHGYH. Positions 176–185 are enriched in basic and acidic residues; that stretch reads HHGDGHWHKH.

The protein belongs to the UreE family.

Its subcellular location is the cytoplasm. Functionally, involved in urease metallocenter assembly. Binds nickel. Probably functions as a nickel donor during metallocenter assembly. This is Urease accessory protein UreE from Haemophilus influenzae (strain PittEE).